Here is a 407-residue protein sequence, read N- to C-terminus: Imidazolonepropionase (407 aa).

Fe(3+) is bound by residues histidine 68 and histidine 70. 2 residues coordinate Zn(2+): histidine 68 and histidine 70. 4-imidazolone-5-propanoate contacts are provided by arginine 77, tyrosine 140, and histidine 173. Tyrosine 140 contacts N-formimidoyl-L-glutamate. Position 238 (histidine 238) interacts with Fe(3+). Histidine 238 is a binding site for Zn(2+). Position 241 (glutamine 241) interacts with 4-imidazolone-5-propanoate. Aspartate 313 serves as a coordination point for Fe(3+). Aspartate 313 contributes to the Zn(2+) binding site. Positions 315 and 317 each coordinate N-formimidoyl-L-glutamate. Threonine 318 is a binding site for 4-imidazolone-5-propanoate.

It belongs to the metallo-dependent hydrolases superfamily. HutI family. Zn(2+) serves as cofactor. It depends on Fe(3+) as a cofactor.

It localises to the cytoplasm. The catalysed reaction is 4-imidazolone-5-propanoate + H2O = N-formimidoyl-L-glutamate. Its pathway is amino-acid degradation; L-histidine degradation into L-glutamate; N-formimidoyl-L-glutamate from L-histidine: step 3/3. Functionally, catalyzes the hydrolytic cleavage of the carbon-nitrogen bond in imidazolone-5-propanoate to yield N-formimidoyl-L-glutamate. It is the third step in the universal histidine degradation pathway. In Burkholderia mallei (strain ATCC 23344), this protein is Imidazolonepropionase.